Consider the following 310-residue polypeptide: Cytochrome f (310 aa).

The signal sequence occupies residues 1 to 23 (MRRLLSSTFAALIVGLAVFSAPA). Residues Y28, C48, C51, and H52 each contribute to the heme site. The chain crosses the membrane as a helical span at residues 277 to 297 (IYGMLAFFAAVALAQIMLVLK).

This sequence belongs to the cytochrome f family. In terms of assembly, the 4 large subunits of the cytochrome b6-f complex are cytochrome b6, subunit IV (17 kDa polypeptide, PetD), cytochrome f and the Rieske protein, while the 4 small subunits are PetG, PetL, PetM and PetN. The complex functions as a dimer. The cofactor is heme.

The protein resides in the cellular thylakoid membrane. In terms of biological role, component of the cytochrome b6-f complex, which mediates electron transfer between photosystem II (PSII) and photosystem I (PSI), cyclic electron flow around PSI, and state transitions. The protein is Cytochrome f of Synechococcus sp. (strain CC9311).